The following is a 186-amino-acid chain: Elongation factor P (186 aa).

Belongs to the elongation factor P family.

Its subcellular location is the cytoplasm. It functions in the pathway protein biosynthesis; polypeptide chain elongation. Its function is as follows. Involved in peptide bond synthesis. Stimulates efficient translation and peptide-bond synthesis on native or reconstituted 70S ribosomes in vitro. Probably functions indirectly by altering the affinity of the ribosome for aminoacyl-tRNA, thus increasing their reactivity as acceptors for peptidyl transferase. The polypeptide is Elongation factor P (Brucella ovis (strain ATCC 25840 / 63/290 / NCTC 10512)).